Reading from the N-terminus, the 306-residue chain is Pantothenate kinase (306 aa).

ATP is bound at residue 91–98; that stretch reads GSVAVGKS.

This sequence belongs to the prokaryotic pantothenate kinase family.

The protein resides in the cytoplasm. It catalyses the reaction (R)-pantothenate + ATP = (R)-4'-phosphopantothenate + ADP + H(+). Its pathway is cofactor biosynthesis; coenzyme A biosynthesis; CoA from (R)-pantothenate: step 1/5. The sequence is that of Pantothenate kinase from Streptococcus pyogenes serotype M5 (strain Manfredo).